The primary structure comprises 160 residues: Protein-export protein SecB (160 aa).

Belongs to the SecB family. In terms of assembly, homotetramer, a dimer of dimers. One homotetramer interacts with 1 SecA dimer.

The protein resides in the cytoplasm. Its function is as follows. One of the proteins required for the normal export of preproteins out of the cell cytoplasm. It is a molecular chaperone that binds to a subset of precursor proteins, maintaining them in a translocation-competent state. It also specifically binds to its receptor SecA. The chain is Protein-export protein SecB from Agrobacterium fabrum (strain C58 / ATCC 33970) (Agrobacterium tumefaciens (strain C58)).